The following is an 80-amino-acid chain: U-actitoxin-Avd9b (80 aa).

A signal peptide spans 1–20 (MNLKVLAVFVLCAILVVVTA). A propeptide spanning residues 21–39 (ERRGTETGGYKKDTLQDLK) is cleaved from the precursor. Residues 45–80 (CFDRYREAACTSDNIRLLCKTSAKYQINCKKSCGLC) enclose the ShKT domain. 3 disulfide bridges follow: cysteine 45-cysteine 80, cysteine 54-cysteine 73, and cysteine 63-cysteine 77. The segment at 68–69 (KY) is crucial for binding to potassium channels.

The protein belongs to the sea anemone type 1 potassium channel toxin family. Type 1b subfamily.

The protein resides in the secreted. Its subcellular location is the nematocyst. In terms of biological role, inhibits voltage-gated potassium channels (Kv1/KCNA). This chain is U-actitoxin-Avd9b, found in Anemonia viridis (Snakelocks anemone).